We begin with the raw amino-acid sequence, 2151 residues long: Protein PRR14L (2151 aa).

2 stretches are compositionally biased toward basic and acidic residues: residues 112–123 and 134–154; these read KRSESMEPKVFR and EPSE…EEKT. 3 disordered regions span residues 112–160, 206–225, and 314–350; these read KRSE…SQED, GTKT…KDLS, and QLHG…SDLS. At Ser-157 the chain carries Phosphoserine. Positions 322 to 350 are enriched in polar residues; sequence QPSSTHDSPTATSPLKENSEVSCFTSDLS. Residues Ser-582 and Ser-945 each carry the phosphoserine modification. A disordered region spans residues 974–1017; that stretch reads SNQNRPDECKSEGQSAKEMLSSDQRETVTEPHGEVNHNQKDLLV. Basic and acidic residues predominate over residues 996–1013; it reads DQRETVTEPHGEVNHNQK. Ser-1029 is subject to Phosphoserine. The segment covering 1091 to 1103 has biased composition (basic and acidic residues); that stretch reads DSRSTLSRRELDA. Disordered regions lie at residues 1091–1115, 1178–1226, 1782–1802, and 1986–2012; these read DSRS…DSDF, DSHY…SCHD, TGVH…PLQD, and AACP…KVSQ. The span at 1178–1187 shows a compositional bias: polar residues; that stretch reads DSHYGQQDKG. A compositionally biased stretch (basic and acidic residues) spans 1188–1201; the sequence is TSLRETQEMTEGSR.

This is Protein PRR14L (PRR14L) from Homo sapiens (Human).